A 523-amino-acid chain; its full sequence is 2-isopropylmalate synthase (523 aa).

In terms of domain architecture, Pyruvate carboxyltransferase spans 5 to 267; sequence VIIFDTTLRD…ETGINAKEIH (263 aa). The Mn(2+) site is built by aspartate 14, histidine 202, histidine 204, and asparagine 238. The interval 392-523 is regulatory domain; it reads KLQQLVVHSD…QQEKQVLGGV (132 aa).

The protein belongs to the alpha-IPM synthase/homocitrate synthase family. LeuA type 1 subfamily. As to quaternary structure, homodimer. Mn(2+) serves as cofactor.

Its subcellular location is the cytoplasm. It carries out the reaction 3-methyl-2-oxobutanoate + acetyl-CoA + H2O = (2S)-2-isopropylmalate + CoA + H(+). Its pathway is amino-acid biosynthesis; L-leucine biosynthesis; L-leucine from 3-methyl-2-oxobutanoate: step 1/4. In terms of biological role, catalyzes the condensation of the acetyl group of acetyl-CoA with 3-methyl-2-oxobutanoate (2-ketoisovalerate) to form 3-carboxy-3-hydroxy-4-methylpentanoate (2-isopropylmalate). The protein is 2-isopropylmalate synthase of Shewanella piezotolerans (strain WP3 / JCM 13877).